Reading from the N-terminus, the 104-residue chain is Large ribosomal subunit protein uL24 (104 aa).

Belongs to the universal ribosomal protein uL24 family. In terms of assembly, part of the 50S ribosomal subunit.

Functionally, one of two assembly initiator proteins, it binds directly to the 5'-end of the 23S rRNA, where it nucleates assembly of the 50S subunit. Its function is as follows. One of the proteins that surrounds the polypeptide exit tunnel on the outside of the subunit. This Clostridium beijerinckii (strain ATCC 51743 / NCIMB 8052) (Clostridium acetobutylicum) protein is Large ribosomal subunit protein uL24.